Here is a 977-residue protein sequence, read N- to C-terminus: Kinesin-like protein KIN-7L, chloroplastic (977 aa).

A compositionally biased stretch (polar residues) spans 1–12 (MGSKQVSKTRNG). Residues 1–66 (MGSKQVSKTR…PPKPLQSKEN (66 aa)) are disordered. Low complexity-rich tracts occupy residues 22–31 (SSASSTTSSS) and 38–54 (SVDS…RSKP). The Kinesin motor domain maps to 66–385 (NVTVTVRFRP…LKFAHRAKHI (320 aa)). 146-153 (GVTSSGKT) is a binding site for ATP. Residues 386-471 (EIQAAQNKII…LTKLILVSNK (86 aa)) are a coiled coil. The disordered stretch occupies residues 549–589 (DSSLGGSSLSDKSSAVKSNSTPSTPQGEGSDFHTESRLSEG). Residues 551–561 (SLGGSSLSDKS) show a composition bias toward low complexity. A compositionally biased stretch (polar residues) spans 563 to 575 (AVKSNSTPSTPQG). Coiled coils occupy residues 626-688 (MEIL…GKQI) and 732-942 (IQEQ…LENE). Polar residues predominate over residues 864 to 876 (SSVTTPQGKTGNL). 2 disordered regions span residues 864-891 (SSVT…KEQE) and 958-977 (AANS…HFGT). The segment covering 879–891 (GRRESVSKRKEQE) has biased composition (basic and acidic residues). Polar residues predominate over residues 958–967 (AANSGLSDSV). A compositionally biased stretch (basic and acidic residues) spans 968–977 (SETRIEHFGT).

The protein belongs to the TRAFAC class myosin-kinesin ATPase superfamily. Kinesin family. KIN-7 subfamily.

It is found in the plastid. It localises to the chloroplast. The protein is Kinesin-like protein KIN-7L, chloroplastic of Arabidopsis thaliana (Mouse-ear cress).